The following is a 1122-amino-acid chain: TSET complex member tstF (1122 aa).

Low complexity predominate over residues 88 to 126 (SSSASGINGTNNNNSGSNSSNNNNNNNGSLSNSPNNNNN). 2 disordered regions span residues 88–131 (SSSA…AFIG) and 178–215 (QTLH…STNS). A compositionally biased stretch (polar residues) spans 178–190 (QTLHNRSPNNTIK). Residues 191–215 (LSPNSSNNDSLNNNNNNINNNSTNS) are compositionally biased toward low complexity. 3 WD repeats span residues 298-337 (FENK…IEKQ), 342-381 (PKGT…LATQ), and 383-422 (SKVH…EVSK). The interval 731–775 (NGSVGGSSSNNSANSNNSNNNNNNNNNNSNNSNNNNNSSQPILEP) is disordered.

In terms of assembly, component of the TSET complex, a heterohexamer composed of tstA, tstB, tstC, tstD, tstE and tstF, which may act in plasma membrane turnover. tstA, tstB, tstC and tstD are likely to be the core complex members with tstE and tstF acting as associated scaffold proteins.

This is TSET complex member tstF from Dictyostelium discoideum (Social amoeba).